The sequence spans 38 residues: Photosystem II reaction center protein Y (38 aa).

A helical membrane pass occupies residues 5–23; it reads VVVVLAPVIIAGSWAIFNI.

Belongs to the PsbY family. PSII is composed of 1 copy each of membrane proteins PsbA, PsbB, PsbC, PsbD, PsbE, PsbF, PsbH, PsbI, PsbJ, PsbK, PsbL, PsbM, PsbT, PsbX, PsbY, PsbZ, Psb30/Ycf12, peripheral proteins PsbO, CyanoQ (PsbQ), PsbU, PsbV and a large number of cofactors. It forms dimeric complexes.

The protein localises to the cellular thylakoid membrane. Its function is as follows. Loosely associated component of the core of photosystem II (PSII), it is not always seen in crystals. PSII is a light-driven water plastoquinone oxidoreductase, using light energy to abstract electrons from H(2)O, generating a proton gradient subsequently used for ATP formation. This is Photosystem II reaction center protein Y from Picosynechococcus sp. (strain ATCC 27264 / PCC 7002 / PR-6) (Agmenellum quadruplicatum).